The following is a 142-amino-acid chain: Small heat shock protein IbpB (142 aa).

A sHSP domain is found at 26–137; sequence AGESQSFPPY…APQRIAISER (112 aa).

Belongs to the small heat shock protein (HSP20) family. Homodimer. Forms homomultimers of about 100-150 subunits at optimal growth temperatures. Conformation changes to oligomers at high temperatures or high ionic concentrations. The decrease in size of the multimers is accompanied by an increase in chaperone activity.

It is found in the cytoplasm. In terms of biological role, associates with aggregated proteins, together with IbpA, to stabilize and protect them from irreversible denaturation and extensive proteolysis during heat shock and oxidative stress. Aggregated proteins bound to the IbpAB complex are more efficiently refolded and reactivated by the ATP-dependent chaperone systems ClpB and DnaK/DnaJ/GrpE. Its activity is ATP-independent. This Klebsiella pneumoniae (strain 342) protein is Small heat shock protein IbpB.